The primary structure comprises 127 residues: Glycine cleavage system H protein (127 aa).

Residues 24–105 form the Lipoyl-binding domain; the sequence is TVKVGISDHA…PYEAWLFAVR (82 aa). The residue at position 65 (Lys-65) is an N6-lipoyllysine.

Belongs to the GcvH family. In terms of assembly, the glycine cleavage system is composed of four proteins: P, T, L and H. The cofactor is (R)-lipoate.

Functionally, the glycine cleavage system catalyzes the degradation of glycine. The H protein shuttles the methylamine group of glycine from the P protein to the T protein. The sequence is that of Glycine cleavage system H protein from Methylococcus capsulatus (strain ATCC 33009 / NCIMB 11132 / Bath).